Consider the following 151-residue polypeptide: 3-dehydroquinate dehydratase (151 aa).

Tyr-26 (proton acceptor) is an active-site residue. Substrate is bound by residues Asn-77, His-83, and Asp-90. The active-site Proton donor is His-103. Substrate contacts are provided by residues 104–105 and Arg-114; that span reads LS.

The protein belongs to the type-II 3-dehydroquinase family. In terms of assembly, homododecamer.

The catalysed reaction is 3-dehydroquinate = 3-dehydroshikimate + H2O. It functions in the pathway metabolic intermediate biosynthesis; chorismate biosynthesis; chorismate from D-erythrose 4-phosphate and phosphoenolpyruvate: step 3/7. Functionally, catalyzes a trans-dehydration via an enolate intermediate. The chain is 3-dehydroquinate dehydratase from Pelodictyon phaeoclathratiforme (strain DSM 5477 / BU-1).